A 294-amino-acid polypeptide reads, in one-letter code: Decaprenyl-diphosphate synthase subunit 2 (294 aa).

Belongs to the FPP/GGPP synthase family. Heterotetramer of 2 dps1 and 2 dlp1 subunits.

Its subcellular location is the mitochondrion. It carries out the reaction 7 isopentenyl diphosphate + (2E,6E)-farnesyl diphosphate = all-trans-decaprenyl diphosphate + 7 diphosphate. It participates in cofactor biosynthesis; ubiquinone biosynthesis. Supplies decaprenyl diphosphate, the precursor for the side chain of the isoprenoid quinones ubiquinone-10. This is Decaprenyl-diphosphate synthase subunit 2 (dlp1) from Schizosaccharomyces pombe (strain 972 / ATCC 24843) (Fission yeast).